We begin with the raw amino-acid sequence, 394 residues long: Large ribosomal subunit protein mL44 (394 aa).

Residues 1 to 21 (MFRHVAQNLGSRNTSIQSYRL) constitute a mitochondrion transit peptide.

Belongs to the ribonuclease III family. Mitochondrion-specific ribosomal protein mL44 subfamily. As to quaternary structure, component of the mitochondrial large ribosomal subunit (mt-LSU).

The protein localises to the mitochondrion. In terms of biological role, component of the mitochondrial ribosome. May have a function in the assembly/stability of nascent mitochondrial polypeptides exiting the ribosome. The chain is Large ribosomal subunit protein mL44 from Caenorhabditis elegans.